The primary structure comprises 360 residues: Peptide chain release factor 1 (360 aa).

The residue at position 236 (Q236) is an N5-methylglutamine.

It belongs to the prokaryotic/mitochondrial release factor family. In terms of processing, methylated by PrmC. Methylation increases the termination efficiency of RF1.

The protein localises to the cytoplasm. Peptide chain release factor 1 directs the termination of translation in response to the peptide chain termination codons UAG and UAA. The sequence is that of Peptide chain release factor 1 from Limosilactobacillus fermentum (strain NBRC 3956 / LMG 18251) (Lactobacillus fermentum).